We begin with the raw amino-acid sequence, 386 residues long: MKRINKDYLYKLTNNYIKNIDISIKDHYINEYNNKGTKLQRINKINSWDNQLYKFNKKNVINTWILDRLVSKLLIKIFKVRVNIINNNIINNGQIKDIYINKPKFKHTINKVYINFNYILSSNNITINDIDNNMNKYYTSIINDINNILGISNNNNNNIINKDNISNYLSKLYNKKVIIESNRLIYHYNDNTILNKMIINNMEKHKGGLSGKYSKILRTNIPVNNSILIRNKYISSIINNNYIKLNHIINLTSYNNLNILNIYNTLNLNKISKDLLINKYIIGLNVLYKGKNLNTAGISRSIKDRLLLGSLSNKLYGKYSNFLSSSLINNNNNNLKLGSSNINTNLNINKSYKLNYIPNHHNIITNNKVNKVKTGTFGITTKLNTI.

It belongs to the universal ribosomal protein uS3 family.

It is found in the mitochondrion. Its function is as follows. Essential for mitochondrial protein synthesis and required for the maturation of small ribosomal subunits. The sequence is that of Small ribosomal subunit protein uS3m (VAR1) from Wickerhamomyces canadensis (Yeast).